A 207-amino-acid chain; its full sequence is Urease accessory protein UreG (207 aa).

Position 14-21 (14-21) interacts with GTP; the sequence is GPVGSGKT.

The protein belongs to the SIMIBI class G3E GTPase family. UreG subfamily. As to quaternary structure, homodimer. UreD, UreF and UreG form a complex that acts as a GTP-hydrolysis-dependent molecular chaperone, activating the urease apoprotein by helping to assemble the nickel containing metallocenter of UreC. The UreE protein probably delivers the nickel.

The protein resides in the cytoplasm. In terms of biological role, facilitates the functional incorporation of the urease nickel metallocenter. This process requires GTP hydrolysis, probably effectuated by UreG. This Pseudomonas entomophila (strain L48) protein is Urease accessory protein UreG.